The primary structure comprises 568 residues: Kinetochore protein NDC80 homolog (568 aa).

The segment at 1–59 (MRGGAAGKRRTTVGFGGAPPPPPPSIEQQRHLFNSRDSDASFASSRPSSIGLGGRGASD) is disordered. Residues 28 to 39 (QQRHLFNSRDSD) are compositionally biased toward basic and acidic residues. The span at 40–49 (ASFASSRPSS) shows a compositional bias: low complexity. 2 coiled-coil regions span residues 241–334 (KESL…AEVA) and 433–469 (IESKRSLLGSIQLQINDLEEKMKLVKKETQELSTKCD).

Belongs to the NDC80/HEC1 family. Component of the NDC80 complex, which consists of NDC80, NUF2, SPC24 and SPC25.

The protein resides in the chromosome. It is found in the centromere. Its function is as follows. Acts as a component of the essential kinetochore-associated NDC80 complex, which is required for chromosome segregation and spindle checkpoint activity to ensure proper cell division. This Arabidopsis thaliana (Mouse-ear cress) protein is Kinetochore protein NDC80 homolog.